Consider the following 276-residue polypeptide: Bifunctional protein FolD 1 (276 aa).

NADP(+) is bound by residues 161–163 (GRG), Ser-186, and Thr-227.

The protein belongs to the tetrahydrofolate dehydrogenase/cyclohydrolase family. Homodimer.

It carries out the reaction (6R)-5,10-methylene-5,6,7,8-tetrahydrofolate + NADP(+) = (6R)-5,10-methenyltetrahydrofolate + NADPH. The enzyme catalyses (6R)-5,10-methenyltetrahydrofolate + H2O = (6R)-10-formyltetrahydrofolate + H(+). It participates in one-carbon metabolism; tetrahydrofolate interconversion. Functionally, catalyzes the oxidation of 5,10-methylenetetrahydrofolate to 5,10-methenyltetrahydrofolate and then the hydrolysis of 5,10-methenyltetrahydrofolate to 10-formyltetrahydrofolate. This chain is Bifunctional protein FolD 1, found in Frankia casuarinae (strain DSM 45818 / CECT 9043 / HFP020203 / CcI3).